A 285-amino-acid polypeptide reads, in one-letter code: RNA polymerase sigma factor RpoH (285 aa).

A sigma-70 factor domain-2 region spans residues L53–R122. An Interaction with polymerase core subunit RpoC motif is present at residues D77–Q80. The segment at A229–M281 is sigma-70 factor domain-4. Residues L254–K273 constitute a DNA-binding region (H-T-H motif).

It belongs to the sigma-70 factor family. RpoH subfamily. Interacts with the RNA polymerase core enzyme.

Its subcellular location is the cytoplasm. Sigma factors are initiation factors that promote the attachment of RNA polymerase to specific initiation sites and are then released. This sigma factor is involved in regulation of expression of heat shock genes. The protein is RNA polymerase sigma factor RpoH of Serratia marcescens.